Here is a 370-residue protein sequence, read N- to C-terminus: Gap junction delta-4 protein (370 aa).

At M1–T19 the chain is on the cytoplasmic side. The chain crosses the membrane as a helical span at residues M20 to A40. Residues G41–R76 are Extracellular-facing. The helical transmembrane segment at F77–L97 threads the bilayer. Topologically, residues H98–H146 are cytoplasmic. Residues L147–F167 form a helical membrane-spanning segment. Residues L168–L196 lie on the Extracellular side of the membrane. The helical transmembrane segment at L197–V217 threads the bilayer. The Cytoplasmic portion of the chain corresponds to C218 to V370. The tract at residues M224–V370 is disordered. Residues A246 to E260 show a composition bias toward basic and acidic residues. A compositionally biased stretch (low complexity) spans P331–S346.

Belongs to the connexin family. Delta-type subfamily. In terms of assembly, a connexon is composed of a hexamer of connexins. As to expression, expressed in pancreas, kidney, skeletal muscle, liver, placenta, and heart.

The protein localises to the cell membrane. The protein resides in the cell junction. Its subcellular location is the gap junction. Functionally, one gap junction consists of a cluster of closely packed pairs of transmembrane channels, the connexons, through which materials of low MW diffuse from one cell to a neighboring cell. This is Gap junction delta-4 protein (GJD4) from Homo sapiens (Human).